Consider the following 514-residue polypeptide: 2-isopropylmalate synthase (514 aa).

The 263-residue stretch at 5–267 (VIIFDTTLRD…ETNIKHEEIH (263 aa)) folds into the Pyruvate carboxyltransferase domain. Positions 14, 202, 204, and 238 each coordinate Mn(2+). The tract at residues 392-514 (KLNYLSVQSG…AEIKERIATV (123 aa)) is regulatory domain.

The protein belongs to the alpha-IPM synthase/homocitrate synthase family. LeuA type 1 subfamily. As to quaternary structure, homodimer. Mn(2+) serves as cofactor.

The protein resides in the cytoplasm. The enzyme catalyses 3-methyl-2-oxobutanoate + acetyl-CoA + H2O = (2S)-2-isopropylmalate + CoA + H(+). It functions in the pathway amino-acid biosynthesis; L-leucine biosynthesis; L-leucine from 3-methyl-2-oxobutanoate: step 1/4. Functionally, catalyzes the condensation of the acetyl group of acetyl-CoA with 3-methyl-2-oxobutanoate (2-ketoisovalerate) to form 3-carboxy-3-hydroxy-4-methylpentanoate (2-isopropylmalate). This is 2-isopropylmalate synthase from Photobacterium profundum (strain SS9).